The following is a 740-amino-acid chain: Elongation factor 2 (740 aa).

Positions 23 to 264 constitute a tr-type G domain; sequence AQIRNAGTLA…MIIEHVPPPN (242 aa). GTP contacts are provided by residues 32–39, 98–102, and 152–155; these read AHVDHGKT, DTPGH, and NKID. A Diphthamide modification is found at His605.

The protein belongs to the TRAFAC class translation factor GTPase superfamily. Classic translation factor GTPase family. EF-G/EF-2 subfamily.

The protein resides in the cytoplasm. Catalyzes the GTP-dependent ribosomal translocation step during translation elongation. During this step, the ribosome changes from the pre-translocational (PRE) to the post-translocational (POST) state as the newly formed A-site-bound peptidyl-tRNA and P-site-bound deacylated tRNA move to the P and E sites, respectively. Catalyzes the coordinated movement of the two tRNA molecules, the mRNA and conformational changes in the ribosome. This is Elongation factor 2 from Pyrobaculum neutrophilum (strain DSM 2338 / JCM 9278 / NBRC 100436 / V24Sta) (Thermoproteus neutrophilus).